A 363-amino-acid polypeptide reads, in one-letter code: MGSLAAEKTVTGWAARDASGHLTPYNYTLRKTGPEDVVVKVLYCGICHTDIHQAKNHLGASKYPMVPGHEVVGEVVEVGPEVTKYSAGDVVGVGVIVGCCRECHPCKANVEQYCNKRIWSYNDVYTDGRPTQGGFASAMVVDQKFVVKIPAGLAPEQAAPLLCAGLTVYSPLKHFGLMSPGLRGGVLGLGGVGHMGVKVAKSMGHHVTVISSSARKRGEAMDDLGADAYLVSSDAAAMAAAGDSLDYIIDTVPVHHPLEPYLALLKLDGKLILMGVINQPLSFISPMVMLGRKAITGSFIGSMAETEEVLNFCVDKGLTSQIEVVKMDYVNQALERLERNDVRYRFVVDVAGSNIDDADAPPA.

Cys-47 contacts Zn(2+). Thr-49 provides a ligand contact to NADP(+). Residues His-69, Glu-70, Cys-100, Cys-103, Cys-106, Cys-114, and Cys-163 each contribute to the Zn(2+) site. Residues Thr-167, 188-193 (GLGGVG), 211-216 (SSSARK), Thr-251, Gly-275, and 298-300 (SFI) contribute to the NADP(+) site.

This sequence belongs to the zinc-containing alcohol dehydrogenase family. As to quaternary structure, homodimer. Zn(2+) is required as a cofactor. In terms of tissue distribution, expressed in roots behind the root tips in the pericycle region and layer of cortical cells adjacent to the exodermis. Expressed in vascular bundles and lateral veins of leaf sheaths and blades. Expressed in the vicinity of vascular bundles in the first internode below the inflorescence. Highly expressed in the culm.

It carries out the reaction (E)-cinnamyl alcohol + NADP(+) = (E)-cinnamaldehyde + NADPH + H(+). It catalyses the reaction (E)-coniferol + NADP(+) = (E)-coniferaldehyde + NADPH + H(+). The enzyme catalyses (E)-sinapyl alcohol + NADP(+) = (E)-sinapaldehyde + NADPH + H(+). The catalysed reaction is (E)-4-coumaroyl alcohol + NADP(+) = (E)-4-coumaraldehyde + NADPH + H(+). It carries out the reaction (E)-caffeyl alcohol + NADP(+) = (E)-caffeyl aldehyde + NADPH + H(+). Its pathway is aromatic compound metabolism; phenylpropanoid biosynthesis. Involved in lignin biosynthesis. Catalyzes the final step specific for the production of lignin monomers. Catalyzes the NADPH-dependent reduction of coniferaldehyde and sinapaldehyde to their respective alcohols. Plays the major role in monolignol biosynthesis. Functions cooperatively with COMT in the culm internodes for the biosynthesis of monolignols, the lignin precursors. May be involved in lignin biosynthesis in leaves and roots. The sequence is that of Cinnamyl alcohol dehydrogenase 2 from Oryza sativa subsp. japonica (Rice).